Reading from the N-terminus, the 160-residue chain is Lymphocyte antigen 96 (160 aa).

The first 16 residues, 1 to 16 (MLPFILFSTLLPLIFT), serve as a signal peptide directing secretion. 3 disulfide bridges follow: Cys-25–Cys-51, Cys-37–Cys-148, and Cys-95–Cys-105. 3 N-linked (GlcNAc...) asparagine glycosylation sites follow: Asn-26, Asn-77, and Asn-101. An interaction with lipopolysaccharide region spans residues 119–123 (FSFKG). Asn-150 is a glycosylation site (N-linked (GlcNAc...) asparagine).

Heterogeneous homomer formed from homodimers; disulfide-linked. Belongs to the lipopolysaccharide (LPS) receptor, a multi-protein complex containing at least CD14, LY96 and TLR4. Binds to the extracellular domains of TLR2 and TLR4. Ligand binding induces interaction with TLR4 and oligomerization of the complex. Post-translationally, N-glycosylated.

Its subcellular location is the secreted. It localises to the extracellular space. Its function is as follows. Binds bacterial lipopolysaccharide (LPS). Cooperates with TLR4 in the innate immune response to bacterial lipopolysaccharide (LPS), and with TLR2 in the response to cell wall components from Gram-positive and Gram-negative bacteria. Enhances TLR4-dependent activation of NF-kappa-B. Cells expressing both LY96 and TLR4, but not TLR4 alone, respond to LPS. The polypeptide is Lymphocyte antigen 96 (LY96) (Cricetulus griseus (Chinese hamster)).